The primary structure comprises 240 residues: 1-acyl-sn-glycerol-3-phosphate acyltransferase (240 aa).

The short motif at 73-78 is the HXXXXD motif element; it reads HQNNYD.

It belongs to the 1-acyl-sn-glycerol-3-phosphate acyltransferase family.

The protein resides in the cell inner membrane. It carries out the reaction a 1-acyl-sn-glycero-3-phosphate + an acyl-CoA = a 1,2-diacyl-sn-glycero-3-phosphate + CoA. It participates in phospholipid metabolism; CDP-diacylglycerol biosynthesis; CDP-diacylglycerol from sn-glycerol 3-phosphate: step 2/3. Its function is as follows. Converts lysophosphatidic acid (LPA) into phosphatidic acid by incorporating acyl moiety at the 2 position. This is 1-acyl-sn-glycerol-3-phosphate acyltransferase (plsC) from Haemophilus influenzae (strain ATCC 51907 / DSM 11121 / KW20 / Rd).